Consider the following 412-residue polypeptide: MALIVQKFGGTSVGTVERIEQVAEKVKKFREAGDDVVVVVSAMSGETNRLIGLANQIMEQPVPRELDVMVSTGEQVTIALLSMALIKRGVPAVSYTGNQVRILTDSAHTKARILHIDDTHIRADLKAGRVVVVAGFQGVDGNGNITTLGRGGSDTTGVALAAALKADECQIYTDVDGVYTTDPRVVPQARRLDKITFEEMLEMASLGSKVLQIRAVEFAGKYNVPLRVLHSFQEGPGTLITIDDEEESMEQPIISGIAFNRDEAKLTIRGVPDTPGVAFKILGPISAANVEVDMIVQNVAHDNTTDFTFTVHRNDYLNALEILKQTAANIGAREAIGDTNIAKVSIVGVGMRSHAGVASRMFEALAKESINIQMISTSEIKVSVVIEEKYLELAVRALHTAFELDAPARQGE.

2 ACT domains span residues 266 to 340 (LTIR…GDTN) and 346 to 412 (IVGV…RQGE).

Belongs to the aspartokinase family.

It catalyses the reaction L-aspartate + ATP = 4-phospho-L-aspartate + ADP. It functions in the pathway amino-acid biosynthesis; L-lysine biosynthesis via DAP pathway; (S)-tetrahydrodipicolinate from L-aspartate: step 1/4. It participates in amino-acid biosynthesis; L-methionine biosynthesis via de novo pathway; L-homoserine from L-aspartate: step 1/3. The protein operates within amino-acid biosynthesis; L-threonine biosynthesis; L-threonine from L-aspartate: step 1/5. The protein is Aspartokinase (lysC) of Pseudomonas aeruginosa (strain ATCC 15692 / DSM 22644 / CIP 104116 / JCM 14847 / LMG 12228 / 1C / PRS 101 / PAO1).